The primary structure comprises 466 residues: Ceramide glucosyltransferase 1 (466 aa).

A helical membrane pass occupies residues 70-90 (LALSGCIFVSVLYLVHIIAFF). A short sequence motif (D1) is located at residue D148. D200 is a short sequence motif (D2). Residue D294 is a short sequence motif, D3. The Proton acceptor role is filled by D294. Residues 330-334 (RIGRW) carry the (Q/R)XXRW motif. Helical transmembrane passes span 354–374 (CVTSGLIMAFGLNYLGGYSVY) and 403–423 (TPFLFVFIWLFREFTSPFIFI).

Belongs to the glycosyltransferase 2 family. In terms of tissue distribution, expressed in excretory canals, pharyngeal intestinal valve, intestine and intestinal rectal valve.

The protein resides in the membrane. The catalysed reaction is an N-acylsphing-4-enine + UDP-alpha-D-glucose = a beta-D-glucosyl-(1&lt;-&gt;1')-N-acylsphing-4-enine + UDP + H(+). The enzyme catalyses an N-acyl-15-methylhexadecasphing-4-enine + UDP-alpha-D-glucose = an N-acyl-1-beta-D-glucosyl-15-methylhexadecasphing-4-enine + UDP + H(+). Its pathway is lipid metabolism; sphingolipid metabolism. Its function is as follows. Catalyzes the first glycosylation step in glycosphingolipid biosynthesis, the transfer of glucose to ceramide to produce glucosylceramides (GlcCer). GlcCer are known to contribute to the physical properties and physiological functions of membranes and may regulate signal transduction. Only branched-chain sphingoid bases like 15-methylhexadecasphing-4-enine are used for generating complex sphingolipids in Caenorhabditis elegans. Together with cgt-3, plays a role in the trafficking of proteins such as mig-14 to the cell membrane in intestinal cells. The protein is Ceramide glucosyltransferase 1 of Caenorhabditis elegans.